The primary structure comprises 300 residues: Putative 1-phosphofructokinase (300 aa).

ATP contacts are provided by residues 214 to 219 (SDGAQG) and 246 to 247 (GD). D247 acts as the Proton acceptor in catalysis.

It belongs to the carbohydrate kinase PfkB family.

It carries out the reaction beta-D-fructose 1-phosphate + ATP = beta-D-fructose 1,6-bisphosphate + ADP + H(+). Functionally, catalyzes the ATP-dependent phosphorylation of fructose-l-phosphate to fructose-l,6-bisphosphate. The sequence is that of Putative 1-phosphofructokinase (fruK) from Mycoplasma pneumoniae (strain ATCC 29342 / M129 / Subtype 1) (Mycoplasmoides pneumoniae).